The following is a 297-amino-acid chain: Homoserine kinase (297 aa).

82–92 (PLTRGLGSSAS) serves as a coordination point for ATP.

This sequence belongs to the GHMP kinase family. Homoserine kinase subfamily.

The protein resides in the cytoplasm. The catalysed reaction is L-homoserine + ATP = O-phospho-L-homoserine + ADP + H(+). It functions in the pathway amino-acid biosynthesis; L-threonine biosynthesis; L-threonine from L-aspartate: step 4/5. Functionally, catalyzes the ATP-dependent phosphorylation of L-homoserine to L-homoserine phosphate. The chain is Homoserine kinase from Bacillus cereus (strain ZK / E33L).